The primary structure comprises 412 residues: ATP phosphoribosyltransferase regulatory subunit (412 aa).

This sequence belongs to the class-II aminoacyl-tRNA synthetase family. HisZ subfamily. Heteromultimer composed of HisG and HisZ subunits.

The protein localises to the cytoplasm. Its pathway is amino-acid biosynthesis; L-histidine biosynthesis; L-histidine from 5-phospho-alpha-D-ribose 1-diphosphate: step 1/9. Its function is as follows. Required for the first step of histidine biosynthesis. May allow the feedback regulation of ATP phosphoribosyltransferase activity by histidine. This is ATP phosphoribosyltransferase regulatory subunit from Dehalococcoides mccartyi (strain CBDB1).